The chain runs to 195 residues: Group XIIB secretory phospholipase A2-like protein (195 aa).

Residues 1–19 (MKLLCGFFLLWLGLVGNLA) form the signal peptide. Ca(2+)-binding residues include serine 89, tyrosine 91, leucine 93, and aspartate 116.

This sequence belongs to the phospholipase A2 family. Ca(2+) is required as a cofactor.

The protein resides in the secreted. Functionally, not known; does not seem to have catalytic activity. The polypeptide is Group XIIB secretory phospholipase A2-like protein (Pla2g12b) (Mus musculus (Mouse)).